The following is a 3902-amino-acid chain: Hybrid PKS-NRPS synthetase pynA (3902 aa).

The segment at 1-25 (MDTPLSSSEISPRFSNTVPSSVSSM) is disordered. Residues 29-441 (ADPSVIVGLA…GTNAHVILDA (413 aa)) form the Ketosynthase family 3 (KS3) domain. Catalysis depends on for beta-ketoacyl synthase activity residues C201, H324, and H362. The malonyl-CoA:ACP transacylase (MAT) domain stretch occupies residues 555 to 868 (VFTGQGAQWF…PYLASLTRGV (314 aa)). The active-site For malonyltransferase activity is S647. The N-terminal hotdog fold stretch occupies residues 945 to 1080 (HSILGARMPG…GLVSVETNAL (136 aa)). The segment at 945 to 1256 (HSILGARMPG…LEVTALGSDK (312 aa)) is dehydratase (DH) domain. Residues 945–1258 (HSILGARMPG…VTALGSDKTD (314 aa)) form the PKS/mFAS DH domain. The active-site Proton acceptor; for dehydratase activity is H977. Residues 1100-1258 (QESIPAETLY…VTALGSDKTD (159 aa)) are C-terminal hotdog fold. D1164 serves as the catalytic Proton donor; for dehydratase activity. Residues 1629–1945 (GLLETLVFED…MGKHTGKVVL (317 aa)) are enoyl reductase (ER) domain. A ketoreductase (KR) domain region spans residues 1971–2143 (TYLLVGGLGG…AGTTMNCGMI (173 aa)). A Carrier 1 domain is found at 2251–2328 (ERTTLVLSAF…ALVTKASGLI (78 aa)). S2288 carries the post-translational modification O-(pantetheine 4'-phosphoryl)serine. A compositionally biased stretch (basic and acidic residues) spans 2337-2350 (KAENVDNEGAKGNE). Positions 2337-2364 (KAENVDNEGAKGNEDQEVETQQGQLNQP) are disordered. A condensation (C) domain 7 region spans residues 2374-2816 (VPMSSFQQRL…AEVNLCGALE (443 aa)). An adenylation (A) domain 8 region spans residues 2836 to 3248 (SVGVCQRIME…NGLLTFKGRI (413 aa)). The 77-residue stretch at 3391 to 3467 (GDDAEILQGV…AIAGMIQKQL (77 aa)) folds into the Carrier 2 domain. O-(pantetheine 4'-phosphoryl)serine is present on S3427. Positions 3515 to 3774 (LTGIDTFIGL…VDFLPVDALT (260 aa)) are thioesterase (TE) domain.

This sequence in the C-terminal section; belongs to the NRP synthetase family.

It participates in secondary metabolite biosynthesis. Its function is as follows. Hybrid PKS-NRPS synthetase; part of the gene cluster that mediates the biosynthesis of pyranonigrins, a family of antioxidative compounds. The first step of pyranonigrins biosynthesis is performed by the hybrid PKS-NRPS synthetase that condenses 6 malonyl-CoA units to an acetyl starter unit, to form a 1,3,5-trioxotetradecane-6,8-dienyl-ACP. The enoyl reductase (ER) domain of pynA is likely to be functional during the first two rounds of polyketide chain extension, to generate the saturated C-C bonds of the alkyl side chain. PynA subsequently forms the amide bond between the acyl chain and L-serine. Although pynA has a terminal reductase domain, it appears to require the thioesterase pynI for the release of the straight-chain intermediate from pynA via the formation of a tetramic acid pyranonigrin J. The methyltransferase pynC then coverts pyranonigrin J to pyranonigrin I via N-methylation. The FAD-dependent monooxygenase pynG catalyzes an epoxidation-mediated cyclization to form the dihydro-gamma-pyrone moiety, followed by pynD-catalyzed oxidation of the alcohol to the ketone and enolization to yield the characteristic tetramic acid-fused gamma-pyrone core of pyranonigrin H. Pyranonigrin H is substrate of pynH for dehydration-mediated exo-methylene formation from the serine side chain to produce pyranonigrin E, before the oxidase pynE reduces the exo-methylene of pyranonigrin E into a pendant methyl to form pyranonigrin G. The FAD-linked oxidoreductase pynB performs the reverse reaction and converts pyranonigrin G back to pyranonigrin E. This Aspergillus niger (strain ATCC MYA-4892 / CBS 513.88 / FGSC A1513) protein is Hybrid PKS-NRPS synthetase pynA.